Reading from the N-terminus, the 365-residue chain is UDP-N-acetylglucosamine--N-acetylmuramyl-(pentapeptide) pyrophosphoryl-undecaprenol N-acetylglucosamine transferase (365 aa).

UDP-N-acetyl-alpha-D-glucosamine is bound by residues 20-22 (TGG), Asn132, Arg168, Ser196, Ile253, and Gln298.

This sequence belongs to the glycosyltransferase 28 family. MurG subfamily.

The protein localises to the cell inner membrane. The catalysed reaction is di-trans,octa-cis-undecaprenyl diphospho-N-acetyl-alpha-D-muramoyl-L-alanyl-D-glutamyl-meso-2,6-diaminopimeloyl-D-alanyl-D-alanine + UDP-N-acetyl-alpha-D-glucosamine = di-trans,octa-cis-undecaprenyl diphospho-[N-acetyl-alpha-D-glucosaminyl-(1-&gt;4)]-N-acetyl-alpha-D-muramoyl-L-alanyl-D-glutamyl-meso-2,6-diaminopimeloyl-D-alanyl-D-alanine + UDP + H(+). Its pathway is cell wall biogenesis; peptidoglycan biosynthesis. Cell wall formation. Catalyzes the transfer of a GlcNAc subunit on undecaprenyl-pyrophosphoryl-MurNAc-pentapeptide (lipid intermediate I) to form undecaprenyl-pyrophosphoryl-MurNAc-(pentapeptide)GlcNAc (lipid intermediate II). The chain is UDP-N-acetylglucosamine--N-acetylmuramyl-(pentapeptide) pyrophosphoryl-undecaprenol N-acetylglucosamine transferase from Ralstonia nicotianae (strain ATCC BAA-1114 / GMI1000) (Ralstonia solanacearum).